The chain runs to 154 residues: SsrA-binding protein (154 aa).

The interval 131 to 154 (DKRQDLKQKEAKRDIERAFKERQQ) is disordered. The segment covering 132–154 (KRQDLKQKEAKRDIERAFKERQQ) has biased composition (basic and acidic residues).

This sequence belongs to the SmpB family.

Its subcellular location is the cytoplasm. Functionally, required for rescue of stalled ribosomes mediated by trans-translation. Binds to transfer-messenger RNA (tmRNA), required for stable association of tmRNA with ribosomes. tmRNA and SmpB together mimic tRNA shape, replacing the anticodon stem-loop with SmpB. tmRNA is encoded by the ssrA gene; the 2 termini fold to resemble tRNA(Ala) and it encodes a 'tag peptide', a short internal open reading frame. During trans-translation Ala-aminoacylated tmRNA acts like a tRNA, entering the A-site of stalled ribosomes, displacing the stalled mRNA. The ribosome then switches to translate the ORF on the tmRNA; the nascent peptide is terminated with the 'tag peptide' encoded by the tmRNA and targeted for degradation. The ribosome is freed to recommence translation, which seems to be the essential function of trans-translation. The chain is SsrA-binding protein from Listeria innocua serovar 6a (strain ATCC BAA-680 / CLIP 11262).